Here is a 168-residue protein sequence, read N- to C-terminus: Photosystem I assembly protein Ycf3 (168 aa).

TPR repeat units follow at residues 35-68 (AFTY…EIDP), 72-105 (SYIL…NPFL), and 120-153 (GEQA…TPGN).

The protein belongs to the Ycf3 family.

It is found in the plastid. The protein resides in the chloroplast thylakoid membrane. Its function is as follows. Essential for the assembly of the photosystem I (PSI) complex. May act as a chaperone-like factor to guide the assembly of the PSI subunits. The protein is Photosystem I assembly protein Ycf3 of Solanum tuberosum (Potato).